We begin with the raw amino-acid sequence, 726 residues long: Methionine--tRNA ligase (726 aa).

Positions 12–22 match the 'HIGH' region motif; that stretch reads PYVNNIPHLGN. Zn(2+) is bound by residues Cys143, Cys146, Cys155, and Cys158. Residues 330-334 carry the 'KMSKS' region motif; sequence KFSKS. Lys333 contributes to the ATP binding site. The region spanning 562–667 is the tRNA-binding domain; it reads FSEKVCLKVV…DNPIPGERII (106 aa).

This sequence belongs to the class-I aminoacyl-tRNA synthetase family. MetG type 1 subfamily. Homodimer. Requires Zn(2+) as cofactor.

The protein localises to the cytoplasm. It catalyses the reaction tRNA(Met) + L-methionine + ATP = L-methionyl-tRNA(Met) + AMP + diphosphate. In terms of biological role, is required not only for elongation of protein synthesis but also for the initiation of all mRNA translation through initiator tRNA(fMet) aminoacylation. This Borrelia turicatae (strain 91E135) protein is Methionine--tRNA ligase.